The primary structure comprises 288 residues: NH(3)-dependent NAD(+) synthetase (288 aa).

46-53 contributes to the ATP binding site; sequence GISGGQDS. Aspartate 52 is a Mg(2+) binding site. A deamido-NAD(+)-binding site is contributed by arginine 153. Residue threonine 173 participates in ATP binding. Mg(2+) is bound at residue glutamate 178. Deamido-NAD(+) is bound by residues lysine 186 and aspartate 193. Residues lysine 202 and threonine 224 each contribute to the ATP site. 273–274 is a binding site for deamido-NAD(+); the sequence is HK.

The protein belongs to the NAD synthetase family. Homodimer.

It catalyses the reaction deamido-NAD(+) + NH4(+) + ATP = AMP + diphosphate + NAD(+) + H(+). Its pathway is cofactor biosynthesis; NAD(+) biosynthesis; NAD(+) from deamido-NAD(+) (ammonia route): step 1/1. Catalyzes the ATP-dependent amidation of deamido-NAD to form NAD. Uses ammonia as a nitrogen source. The chain is NH(3)-dependent NAD(+) synthetase from Deinococcus geothermalis (strain DSM 11300 / CIP 105573 / AG-3a).